A 163-amino-acid chain; its full sequence is 2-C-methyl-D-erythritol 2,4-cyclodiphosphate synthase (163 aa).

Residues Asp-12 and His-14 each contribute to the a divalent metal cation site. 4-CDP-2-C-methyl-D-erythritol 2-phosphate-binding positions include Asp-12 to His-14 and His-38 to Ser-39. Residue His-46 participates in a divalent metal cation binding. 4-CDP-2-C-methyl-D-erythritol 2-phosphate contacts are provided by residues Asp-60–Gly-62, Phe-65–Asp-69, Thr-136–Glu-139, Phe-143, and Arg-146.

This sequence belongs to the IspF family. In terms of assembly, homotrimer. A divalent metal cation is required as a cofactor.

The enzyme catalyses 4-CDP-2-C-methyl-D-erythritol 2-phosphate = 2-C-methyl-D-erythritol 2,4-cyclic diphosphate + CMP. Its pathway is isoprenoid biosynthesis; isopentenyl diphosphate biosynthesis via DXP pathway; isopentenyl diphosphate from 1-deoxy-D-xylulose 5-phosphate: step 4/6. Functionally, involved in the biosynthesis of isopentenyl diphosphate (IPP) and dimethylallyl diphosphate (DMAPP), two major building blocks of isoprenoid compounds. Catalyzes the conversion of 4-diphosphocytidyl-2-C-methyl-D-erythritol 2-phosphate (CDP-ME2P) to 2-C-methyl-D-erythritol 2,4-cyclodiphosphate (ME-CPP) with a corresponding release of cytidine 5-monophosphate (CMP). This chain is 2-C-methyl-D-erythritol 2,4-cyclodiphosphate synthase, found in Acinetobacter baylyi (strain ATCC 33305 / BD413 / ADP1).